Here is a 450-residue protein sequence, read N- to C-terminus: Probable cysteine desulfurase, mitochondrial (450 aa).

A mitochondrion-targeting transit peptide spans 1–52; that stretch reads MNRSILKFVKNGIISSSSRINNNGFINKNNNNRWFATLPQPNRGIAGEKQPI. Pyridoxal 5'-phosphate is bound by residues 120-121, N200, Q228, and 248-250; these read AT and SGH. Residue K251 is modified to N6-(pyridoxal phosphate)lysine. A pyridoxal 5'-phosphate-binding site is contributed by T288. Catalysis depends on C374, which acts as the Cysteine persulfide intermediate. Position 374 (C374) interacts with [2Fe-2S] cluster.

Belongs to the class-V pyridoxal-phosphate-dependent aminotransferase family. NifS/IscS subfamily. Pyridoxal 5'-phosphate serves as cofactor.

Its subcellular location is the mitochondrion. The protein localises to the nucleus. It carries out the reaction (sulfur carrier)-H + L-cysteine = (sulfur carrier)-SH + L-alanine. In terms of biological role, catalyzes the removal of elemental sulfur from cysteine to produce alanine. It supplies the inorganic sulfur for iron-sulfur (Fe-S) clusters. The chain is Probable cysteine desulfurase, mitochondrial (nfs1) from Dictyostelium discoideum (Social amoeba).